Reading from the N-terminus, the 223-residue chain is RNA-free ribonuclease P (223 aa).

The protein belongs to the HARP family.

The enzyme catalyses Endonucleolytic cleavage of RNA, removing 5'-extranucleotides from tRNA precursor.. Its function is as follows. RNA-free RNase P that catalyzes the removal of the 5'-leader sequence from pre-tRNA to produce the mature 5'-terminus. The protein is RNA-free ribonuclease P of Methanococcus vannielii (strain ATCC 35089 / DSM 1224 / JCM 13029 / OCM 148 / SB).